A 332-amino-acid polypeptide reads, in one-letter code: Glycerol-3-phosphate dehydrogenase [NAD(P)+] (332 aa).

The NADPH site is built by Ser11, Phe12, Lys32, and Lys106. Residues Lys106, Gly137, and Ser139 each contribute to the sn-glycerol 3-phosphate site. Residue Ala141 coordinates NADPH. 5 residues coordinate sn-glycerol 3-phosphate: Lys192, Asp245, Ser255, Arg256, and Asn257. The active-site Proton acceptor is Lys192. Arg256 contacts NADPH. The NADPH site is built by Val280 and Glu282.

It belongs to the NAD-dependent glycerol-3-phosphate dehydrogenase family.

Its subcellular location is the cytoplasm. It carries out the reaction sn-glycerol 3-phosphate + NAD(+) = dihydroxyacetone phosphate + NADH + H(+). The enzyme catalyses sn-glycerol 3-phosphate + NADP(+) = dihydroxyacetone phosphate + NADPH + H(+). It participates in membrane lipid metabolism; glycerophospholipid metabolism. In terms of biological role, catalyzes the reduction of the glycolytic intermediate dihydroxyacetone phosphate (DHAP) to sn-glycerol 3-phosphate (G3P), the key precursor for phospholipid synthesis. The protein is Glycerol-3-phosphate dehydrogenase [NAD(P)+] of Staphylococcus aureus (strain Mu3 / ATCC 700698).